We begin with the raw amino-acid sequence, 239 residues long: tRNA (guanine-N(1)-)-methyltransferase (239 aa).

S-adenosyl-L-methionine contacts are provided by residues glycine 113 and 137–142 (LGDYVL).

This sequence belongs to the RNA methyltransferase TrmD family. As to quaternary structure, homodimer.

The protein resides in the cytoplasm. The catalysed reaction is guanosine(37) in tRNA + S-adenosyl-L-methionine = N(1)-methylguanosine(37) in tRNA + S-adenosyl-L-homocysteine + H(+). Functionally, specifically methylates guanosine-37 in various tRNAs. The chain is tRNA (guanine-N(1)-)-methyltransferase from Cutibacterium acnes (strain DSM 16379 / KPA171202) (Propionibacterium acnes).